The sequence spans 143 residues: Holo-[acyl-carrier-protein] synthase (143 aa).

Mg(2+) is bound by residues D9 and E63.

The protein belongs to the P-Pant transferase superfamily. AcpS family. The cofactor is Mg(2+).

Its subcellular location is the cytoplasm. It carries out the reaction apo-[ACP] + CoA = holo-[ACP] + adenosine 3',5'-bisphosphate + H(+). Functionally, transfers the 4'-phosphopantetheine moiety from coenzyme A to a Ser of acyl-carrier-protein. This is Holo-[acyl-carrier-protein] synthase from Burkholderia pseudomallei (strain 1106a).